Here is a 220-residue protein sequence, read N- to C-terminus: MGFQIAIDGPAASGKSTIAKLLAEKLGFDHLNTGATYRAVAVYLHEKGLSSSSAEEEIENVLKDLKIDYVNGRVYINGEDYTEKIQSPEAGVLASNFARLEVVRRHLVRIQREICDDKNIVVEGRDIGTVVLPNAHLKIFLTASLEARVERKLKEYQKRGLKVTKEEVERELISRDEQDSKRNVAPLKPAEDAVIIDTTSMSVEEVLDRILKLVRERMNT.

9–17 (GPAASGKST) contacts ATP.

It belongs to the cytidylate kinase family. Type 1 subfamily.

It is found in the cytoplasm. The catalysed reaction is CMP + ATP = CDP + ADP. It carries out the reaction dCMP + ATP = dCDP + ADP. The chain is Cytidylate kinase from Thermotoga maritima (strain ATCC 43589 / DSM 3109 / JCM 10099 / NBRC 100826 / MSB8).